Reading from the N-terminus, the 286-residue chain is ATP synthase gamma chain (286 aa).

Belongs to the ATPase gamma chain family. F-type ATPases have 2 components, CF(1) - the catalytic core - and CF(0) - the membrane proton channel. CF(1) has five subunits: alpha(3), beta(3), gamma(1), delta(1), epsilon(1). CF(0) has three main subunits: a, b and c.

It is found in the cell inner membrane. Produces ATP from ADP in the presence of a proton gradient across the membrane. The gamma chain is believed to be important in regulating ATPase activity and the flow of protons through the CF(0) complex. The sequence is that of ATP synthase gamma chain from Flavobacterium johnsoniae (strain ATCC 17061 / DSM 2064 / JCM 8514 / BCRC 14874 / CCUG 350202 / NBRC 14942 / NCIMB 11054 / UW101) (Cytophaga johnsonae).